The following is a 146-amino-acid chain: Leghemoglobin-3 (146 aa).

Residues 2–146 (GFTDKQEALV…LATAIKKAMV (145 aa)) enclose the Globin domain. The residue at position 29 (Y29) is a Nitrated tyrosine. S44 is a binding site for heme b. At S44 the chain carries Phosphoserine. H61 is a binding site for O2. Positions 64, 93, and 96 each coordinate heme b. Y134 carries the nitrated tyrosine modification.

It belongs to the plant globin family. As to quaternary structure, monomer. Post-translationally, nitrated in effective nodules and particularly in hypoxic conditions; this mechanism may play a protective role in the symbiosis by buffering toxic peroxynitrite NO(2)(-). Nitration level decrease during nodule senescence. In terms of processing, phosphorylation at Ser-44 disrupts the molecular environment of its porphyrin ring oxygen binding pocket, thus leading to a reduced oxygen consumption and to the delivery of oxygen O(2) to symbiosomes. In terms of tissue distribution, root nodules.

Its subcellular location is the cytoplasm. The protein resides in the cytosol. It localises to the nucleus. Leghemoglobin that reversibly binds oxygen O(2) through a pentacoordinated heme iron. In root nodules, facilitates the diffusion of oxygen to the bacteroids while preventing the bacterial nitrogenase from being inactivated by buffering dioxygen, nitric oxide and carbon monoxide, and promoting the formation of reactive oxygen species (ROS, e.g. H(2)O(2)). This role is essential for symbiotic nitrogen fixation (SNF). In Medicago sativa (Alfalfa), this protein is Leghemoglobin-3.